A 624-amino-acid chain; its full sequence is FAD-dependent monooxygenase apdD (624 aa).

FAD-binding residues include Glu73 and Asp359.

This sequence belongs to the paxM FAD-dependent monooxygenase family. The cofactor is FAD.

The protein operates within secondary metabolite biosynthesis. In terms of biological role, FAD-dependent monooxygenase; part of the gene cluster that mediates the biosynthesis of aspyridones. The polyketide-amino acid backbone preaspyridone A is first assembled by the PKS-NRPS hybrid apdA. The assembly of preaspyridone A is initiated by loading of malonyl-CoA onto apdA, followed by decarboxylation to yield the acetyl starter unit. The growing polyketide chain then elongates into a tetraketide. The adpA PKS module catalyzes three Claisen condensations, as well as beta-keto processing and methylation. Alpha-methylation step during polyketide synthesis is a prerequisite and a key checkpoint for chain transfer between PKS and NRPS modules. The downstream NRPS module contains the condensation (C), adenylation (A), and thiolation (T) domains and catalyzes the incorporation of tyrosine via the formation of the L-tyrosinyl-thioester and the amide linkage between L-tyrosinyl-thioester and the tetraketide. The bimodular assembly line is terminated with a reductase (R) domain that facilitates formation and release of the tetramic acid product. Because apdA lacks a designated enoylreductase (ER) domain, the required activity is provided the enoyl reductase apdC. ApdC appears to operate with different stereoselectivity in different PKS cycle. Combined with apdC, apdA is proposed to synthesize preaspyridone A via about 20 enzymatic steps. A number of oxidative steps performed successively by the cytochrome P450 monooxygenases apdE and apdB are required for the conversion of preaspyridone A to aspyridone A. The cytochrome P450 monooxygenase apdE is responsible for the oxidative dephenylation of preaspyridone A. Finally, the predicted FAD-dependent monooxygenase apdD and the acyl-CoA dehydrogenase apdG may be involved in the transformation of aspyridone A into aspyridone B. This is FAD-dependent monooxygenase apdD from Emericella nidulans (strain FGSC A4 / ATCC 38163 / CBS 112.46 / NRRL 194 / M139) (Aspergillus nidulans).